We begin with the raw amino-acid sequence, 535 residues long: CTP synthase (535 aa).

The interval 1 to 268 (MKTKYIFVTG…DSLVCKKLEL (268 aa)) is amidoligase domain. Residue serine 14 coordinates CTP. Serine 14 serves as a coordination point for UTP. Position 15–20 (15–20 (SLGKGI)) interacts with ATP. Position 55 (tyrosine 55) interacts with L-glutamine. ATP is bound at residue aspartate 72. Positions 72 and 142 each coordinate Mg(2+). CTP-binding positions include 149–151 (DIE), 189–194 (KTKPTQ), and lysine 225. UTP-binding positions include 189–194 (KTKPTQ) and lysine 225. The Glutamine amidotransferase type-1 domain maps to 293 to 535 (TIGLVGKYVE…IKVACTVKEK (243 aa)). Position 355 (glycine 355) interacts with L-glutamine. The active-site Nucleophile; for glutamine hydrolysis is the cysteine 382. Residues 383-386 (LGMQ), glutamate 406, and arginine 463 each bind L-glutamine. Active-site residues include histidine 508 and glutamate 510.

It belongs to the CTP synthase family. Homotetramer.

It catalyses the reaction UTP + L-glutamine + ATP + H2O = CTP + L-glutamate + ADP + phosphate + 2 H(+). The catalysed reaction is L-glutamine + H2O = L-glutamate + NH4(+). The enzyme catalyses UTP + NH4(+) + ATP = CTP + ADP + phosphate + 2 H(+). It participates in pyrimidine metabolism; CTP biosynthesis via de novo pathway; CTP from UDP: step 2/2. Allosterically activated by GTP, when glutamine is the substrate; GTP has no effect on the reaction when ammonia is the substrate. The allosteric effector GTP functions by stabilizing the protein conformation that binds the tetrahedral intermediate(s) formed during glutamine hydrolysis. Inhibited by the product CTP, via allosteric rather than competitive inhibition. In terms of biological role, catalyzes the ATP-dependent amination of UTP to CTP with either L-glutamine or ammonia as the source of nitrogen. Regulates intracellular CTP levels through interactions with the four ribonucleotide triphosphates. The sequence is that of CTP synthase from Clostridium acetobutylicum (strain ATCC 824 / DSM 792 / JCM 1419 / IAM 19013 / LMG 5710 / NBRC 13948 / NRRL B-527 / VKM B-1787 / 2291 / W).